A 506-amino-acid polypeptide reads, in one-letter code: Bifunctional purine biosynthesis protein PurH (506 aa).

In terms of domain architecture, MGS-like spans 1–146; it reads MARLALLSVS…KNFAHLTVLC (146 aa).

It belongs to the PurH family.

It carries out the reaction (6R)-10-formyltetrahydrofolate + 5-amino-1-(5-phospho-beta-D-ribosyl)imidazole-4-carboxamide = 5-formamido-1-(5-phospho-D-ribosyl)imidazole-4-carboxamide + (6S)-5,6,7,8-tetrahydrofolate. The catalysed reaction is IMP + H2O = 5-formamido-1-(5-phospho-D-ribosyl)imidazole-4-carboxamide. The protein operates within purine metabolism; IMP biosynthesis via de novo pathway; 5-formamido-1-(5-phospho-D-ribosyl)imidazole-4-carboxamide from 5-amino-1-(5-phospho-D-ribosyl)imidazole-4-carboxamide (10-formyl THF route): step 1/1. It functions in the pathway purine metabolism; IMP biosynthesis via de novo pathway; IMP from 5-formamido-1-(5-phospho-D-ribosyl)imidazole-4-carboxamide: step 1/1. This chain is Bifunctional purine biosynthesis protein PurH, found in Nostoc sp. (strain PCC 7120 / SAG 25.82 / UTEX 2576).